A 158-amino-acid chain; its full sequence is NAD(P)H-quinone oxidoreductase subunit N (158 aa).

Belongs to the complex I NdhN subunit family. As to quaternary structure, NDH-1 can be composed of about 15 different subunits; different subcomplexes with different compositions have been identified which probably have different functions.

The protein resides in the cellular thylakoid membrane. The catalysed reaction is a plastoquinone + NADH + (n+1) H(+)(in) = a plastoquinol + NAD(+) + n H(+)(out). It catalyses the reaction a plastoquinone + NADPH + (n+1) H(+)(in) = a plastoquinol + NADP(+) + n H(+)(out). Its function is as follows. NDH-1 shuttles electrons from an unknown electron donor, via FMN and iron-sulfur (Fe-S) centers, to quinones in the respiratory and/or the photosynthetic chain. The immediate electron acceptor for the enzyme in this species is believed to be plastoquinone. Couples the redox reaction to proton translocation, and thus conserves the redox energy in a proton gradient. Cyanobacterial NDH-1 also plays a role in inorganic carbon-concentration. The chain is NAD(P)H-quinone oxidoreductase subunit N from Synechococcus elongatus (strain ATCC 33912 / PCC 7942 / FACHB-805) (Anacystis nidulans R2).